A 311-amino-acid chain; its full sequence is Telomere-binding protein I1 homolog (311 aa).

This sequence belongs to the chordopoxvirinae I1 family.

Its subcellular location is the virion. In terms of biological role, late DNA-binding protein which binds to the hairpin form of the viral telomeric sequence. Required for the production of mature virions (MV). The sequence is that of Telomere-binding protein I1 homolog from Fowlpox virus (strain NVSL) (FPV).